Reading from the N-terminus, the 202-residue chain is LexA repressor (202 aa).

The H-T-H motif DNA-binding region spans 28-48 (RAEIAQRLGFRSPNAAEEHLK). Active-site for autocatalytic cleavage activity residues include S119 and K156.

Belongs to the peptidase S24 family. As to quaternary structure, homodimer.

The enzyme catalyses Hydrolysis of Ala-|-Gly bond in repressor LexA.. In terms of biological role, represses a number of genes involved in the response to DNA damage (SOS response), including recA and lexA. Binds to the 16 bp palindromic sequence 5'-CTGTATATATATACAG-3'. In the presence of single-stranded DNA, RecA interacts with LexA causing an autocatalytic cleavage which disrupts the DNA-binding part of LexA, leading to derepression of the SOS regulon and eventually DNA repair. This chain is LexA repressor, found in Salmonella agona (strain SL483).